Reading from the N-terminus, the 227-residue chain is Cytochrome c oxidase subunit 2 (227 aa).

The Mitochondrial intermembrane portion of the chain corresponds to 1–14 (MPYPMQLGFQDATS). A helical membrane pass occupies residues 15-45 (PIMEELTYFHDHTLMIVFLISSLVLYIIILM). Over 46–59 (LTTKLTHTSTMDAQ) the chain is Mitochondrial matrix. Residues 60–87 (EVETIWTILPAVILVLIALPSLRILYMM) traverse the membrane as a helical segment. Residues 88–227 (DEIYNPYLTI…YFEKWSSMMQ (140 aa)) lie on the Mitochondrial intermembrane side of the membrane. Positions 161, 196, 198, 200, 204, and 207 each coordinate Cu cation. E198 contributes to the Mg(2+) binding site. Y218 carries the post-translational modification Phosphotyrosine.

This sequence belongs to the cytochrome c oxidase subunit 2 family. Component of the cytochrome c oxidase (complex IV, CIV), a multisubunit enzyme composed of 14 subunits. The complex is composed of a catalytic core of 3 subunits MT-CO1, MT-CO2 and MT-CO3, encoded in the mitochondrial DNA, and 11 supernumerary subunits COX4I, COX5A, COX5B, COX6A, COX6B, COX6C, COX7A, COX7B, COX7C, COX8 and NDUFA4, which are encoded in the nuclear genome. The complex exists as a monomer or a dimer and forms supercomplexes (SCs) in the inner mitochondrial membrane with NADH-ubiquinone oxidoreductase (complex I, CI) and ubiquinol-cytochrome c oxidoreductase (cytochrome b-c1 complex, complex III, CIII), resulting in different assemblies (supercomplex SCI(1)III(2)IV(1) and megacomplex MCI(2)III(2)IV(2)). Found in a complex with TMEM177, COA6, COX18, COX20, SCO1 and SCO2. Interacts with TMEM177 in a COX20-dependent manner. Interacts with COX20. Interacts with COX16. Cu cation is required as a cofactor.

Its subcellular location is the mitochondrion inner membrane. It catalyses the reaction 4 Fe(II)-[cytochrome c] + O2 + 8 H(+)(in) = 4 Fe(III)-[cytochrome c] + 2 H2O + 4 H(+)(out). Its function is as follows. Component of the cytochrome c oxidase, the last enzyme in the mitochondrial electron transport chain which drives oxidative phosphorylation. The respiratory chain contains 3 multisubunit complexes succinate dehydrogenase (complex II, CII), ubiquinol-cytochrome c oxidoreductase (cytochrome b-c1 complex, complex III, CIII) and cytochrome c oxidase (complex IV, CIV), that cooperate to transfer electrons derived from NADH and succinate to molecular oxygen, creating an electrochemical gradient over the inner membrane that drives transmembrane transport and the ATP synthase. Cytochrome c oxidase is the component of the respiratory chain that catalyzes the reduction of oxygen to water. Electrons originating from reduced cytochrome c in the intermembrane space (IMS) are transferred via the dinuclear copper A center (CU(A)) of subunit 2 and heme A of subunit 1 to the active site in subunit 1, a binuclear center (BNC) formed by heme A3 and copper B (CU(B)). The BNC reduces molecular oxygen to 2 water molecules using 4 electrons from cytochrome c in the IMS and 4 protons from the mitochondrial matrix. The chain is Cytochrome c oxidase subunit 2 (MT-CO2) from Osphranter robustus (Wallaroo).